The following is a 289-amino-acid chain: Dehydrodolichyl diphosphate synthase 4 (289 aa).

The helical transmembrane segment at 2-22 (LSMLWFLLSLLSLLLLPCLRP) threads the bilayer.

Belongs to the UPP synthase family. Mg(2+) is required as a cofactor.

It localises to the endoplasmic reticulum membrane. Its pathway is protein modification; protein glycosylation. Its function is as follows. Catalyzes cis-prenyl chain elongation to produce the polyprenyl backbone of dolichol, a glycosyl carrier-lipid required for the biosynthesis of several classes of glycoprotein. The chain is Dehydrodolichyl diphosphate synthase 4 from Arabidopsis thaliana (Mouse-ear cress).